The following is a 244-amino-acid chain: Ribosomal RNA small subunit methyltransferase NEP1 (244 aa).

Residues M1–G33 are disordered. A phosphoserine mark is found at S5 and S16. Residues T176, G201, G206, and I219–L224 contribute to the S-adenosyl-L-methionine site.

This sequence belongs to the class IV-like SAM-binding methyltransferase superfamily. RNA methyltransferase NEP1 family. As to quaternary structure, homodimer. Part of the small subunit (SSU) processome, composed of more than 70 proteins and the RNA chaperone small nucleolar RNA (snoRNA) U3.

Its subcellular location is the nucleus. It localises to the nucleolus. It catalyses the reaction pseudouridine(1248) in human 18S rRNA + S-adenosyl-L-methionine = N(1)-methylpseudouridine(1248) in human 18S rRNA + S-adenosyl-L-homocysteine + H(+). In terms of biological role, S-adenosyl-L-methionine-dependent pseudouridine N(1)-methyltransferase that methylates pseudouridine at position in 18S rRNA. Involved the biosynthesis of the hypermodified N1-methyl-N3-(3-amino-3-carboxypropyl) pseudouridine (m1acp3-Psi) conserved in eukaryotic 18S rRNA. Is not able to methylate uridine at this position. Also has an essential role in 40S ribosomal subunit biogenesis independent on its methyltransferase activity, facilitating the incorporation of ribosomal protein S19 during the formation of pre-ribosomes. Part of the small subunit (SSU) processome, first precursor of the small eukaryotic ribosomal subunit. During the assembly of the SSU processome in the nucleolus, many ribosome biogenesis factors, an RNA chaperone and ribosomal proteins associate with the nascent pre-rRNA and work in concert to generate RNA folding, modifications, rearrangements and cleavage as well as targeted degradation of pre-ribosomal RNA by the RNA exosome. The sequence is that of Ribosomal RNA small subunit methyltransferase NEP1 from Mus musculus (Mouse).